Consider the following 224-residue polypeptide: PKHD-type hydroxylase Shewana3_0717 (224 aa).

The Fe2OG dioxygenase domain occupies 78-176; the sequence is QFYPPLFNRY…RTAAFMWLQS (99 aa). Positions 96, 98, and 157 each coordinate Fe cation. R167 is a 2-oxoglutarate binding site.

Fe(2+) serves as cofactor. L-ascorbate is required as a cofactor.

In Shewanella sp. (strain ANA-3), this protein is PKHD-type hydroxylase Shewana3_0717.